We begin with the raw amino-acid sequence, 474 residues long: 15-cis-phytoene desaturase (474 aa).

This sequence belongs to the carotenoid/retinoid oxidoreductase family.

The protein resides in the cell membrane. The catalysed reaction is 2 a plastoquinone + 15-cis-phytoene = 9,9',15-tri-cis-zeta-carotene + 2 a plastoquinol. It functions in the pathway carotenoid biosynthesis; lycopene biosynthesis. With respect to regulation, inhibited by the herbicide norflurazon in a non-competitive way. This enzyme converts phytoene into zeta-carotene via the intermediary of phytofluene by the symmetrical introduction of two double bonds at the C-11 and C-11' positions of phytoene. Also active with phytofluene and 1,2-epoxyphytoene as substrates. This is 15-cis-phytoene desaturase (pds) from Synechococcus elongatus (strain ATCC 33912 / PCC 7942 / FACHB-805) (Anacystis nidulans R2).